The chain runs to 403 residues: 26S proteasome regulatory subunit 8 homolog (403 aa).

Residue 186-193 coordinates ATP; that stretch reads GPPGTGKT.

It belongs to the AAA ATPase family.

The protein resides in the cytoplasm. It is found in the nucleus. Functionally, the 26S proteasome is involved in the ATP-dependent degradation of ubiquitinated proteins. The regulatory (or ATPase) complex confers ATP dependency and substrate specificity to the 26S complex. This is 26S proteasome regulatory subunit 8 homolog (let1) from Schizosaccharomyces pombe (strain 972 / ATCC 24843) (Fission yeast).